The following is a 57-amino-acid chain: Granulin-2 (57 aa).

2 disulfide bridges follow: cysteine 4-cysteine 16 and cysteine 10-cysteine 26.

It belongs to the granulin family. Granulins are disulfide bridged. As to expression, ubiquitous.

The protein resides in the secreted. In terms of biological role, granulins have possible cytokine-like activity. They may play a role in inflammation, wound repair, and tissue remodeling. This Cyprinus carpio (Common carp) protein is Granulin-2.